The following is a 136-amino-acid chain: Large ribosomal subunit protein uL16c (136 aa).

The segment at 1-20 is disordered; sequence MLSPKRTRFRKQHRGRMKGK.

Belongs to the universal ribosomal protein uL16 family. As to quaternary structure, part of the 50S ribosomal subunit.

It is found in the plastid. The protein resides in the chloroplast. This is Large ribosomal subunit protein uL16c from Triticum aestivum (Wheat).